The following is a 331-amino-acid chain: UAP56-interacting factor (331 aa).

The UAP56-binding motif signature appears at 16–34; it reads APDKVDMSLDDIIRLNKKE. Disordered stretches follow at residues 30–51, 63–99, and 158–193; these read LNKKEQQARRPSPGNRRPLQKG, RARGQTQRGGGVPRGAITRAGVGRGRKIPPPVGRRRG, and GQRRPYRQTDIQRGLNSTRPFQQRRRPLPPVQTQRE. Over residues 166–175 the composition is skewed to polar residues; sequence TDIQRGLNST.

This sequence belongs to the UIF family.

Its subcellular location is the nucleus. The protein localises to the nucleoplasm. The protein resides in the nucleus speckle. Its function is as follows. Required for mRNA export from the nucleus to the cytoplasm. Acts as an adapter that uses the ddx39b/uap56-nfx1 pathway to ensure efficient mRNA export and delivering to the nuclear pore. The sequence is that of UAP56-interacting factor (fyttd1) from Salmo salar (Atlantic salmon).